Here is a 1012-residue protein sequence, read N- to C-terminus: Autotransporter adhesin BpaC (1012 aa).

Positions 1 to 71 (MNRIFKSIWC…PFAEEAMAAN (71 aa)) are cleaved as a signal peptide. The interval 72–921 (NAGVCLTYNG…VGQLNSAVSG (850 aa)) is surface exposed passenger domain. Disordered stretches follow at residues 420–746 (GLQG…AGAT) and 785–809 (ENST…ESAA). Positions 427-442 (ANTGTASGDNSTASGD) are enriched in polar residues. Over residues 443–504 (NATASGTNST…ANGTNSTASG (62 aa)) the composition is skewed to low complexity. Over residues 505–519 (DNSTASGTNASATGE) the composition is skewed to polar residues. The segment covering 520–588 (NSTATGTDST…ANGTNSTASG (69 aa)) has biased composition (low complexity). Residues 589-603 (DNSTASGTNASATGE) show a composition bias toward polar residues. The span at 604 to 630 (NSTATGTDSTASGSNSTANGTNSTASG) shows a compositional bias: low complexity. Over residues 631–645 (DNSTASGTNASATGE) the composition is skewed to polar residues. Composition is skewed to low complexity over residues 646–700 (NSTA…TASG) and 708–746 (TNAS…AGAT). The tract at residues 922-959 (IRNQMDGMQGQIDTLARDAYSGIAAATALTMIPDVDPG) is outer membrane translocation of the passenger domain. The tract at residues 960-1012 (KTLAVGIGTANFKGYQASALGATARITQNLKVKTGVSYSGSNYVWGAGMSYQW) is translocator domain.

It belongs to the autotransporter-2 (AT-2) (TC 1.B.40) family. Homotrimer.

The protein localises to the cell surface. The protein resides in the cell outer membrane. Its function is as follows. Involved in virulence. Mediates adherence to human respiratory epithelial cells. The sequence is that of Autotransporter adhesin BpaC from Burkholderia mallei (strain ATCC 23344).